The sequence spans 368 residues: Caffeine synthase 3 (368 aa).

An S-adenosyl-L-homocysteine-binding site is contributed by Tyr23. Thr30 provides a ligand contact to caffeine. The S-adenosyl-L-homocysteine site is built by Cys65, Asn70, Asp102, Leu103, Ser137, and Phe138. The caffeine site is built by Tyr155, His158, and Trp159. Asn176 serves as a coordination point for Mg(2+). Caffeine is bound at residue Arg224. Mg(2+) is bound by residues Asp262, Phe264, and Asn265. Phe320 provides a ligand contact to caffeine.

Belongs to the methyltransferase superfamily. Type-7 methyltransferase family. The cofactor is Mg(2+).

The catalysed reaction is theobromine + S-adenosyl-L-methionine = caffeine + S-adenosyl-L-homocysteine + H(+). It carries out the reaction 7-methylxanthine + S-adenosyl-L-methionine = theobromine + S-adenosyl-L-homocysteine + H(+). It functions in the pathway alkaloid biosynthesis. Functionally, involved in the biosynthesis of caffeine. Catalyzes the conversion of 7-methylxanthine (7mX) to theobromine and of theobromine to caffeine. In Camellia sinensis (Tea plant), this protein is Caffeine synthase 3.